We begin with the raw amino-acid sequence, 353 residues long: Photosystem II protein D1 (353 aa).

The residue at position 2 (Thr-2) is an N-acetylthreonine. Thr-2 is modified (phosphothreonine). A run of 3 helical transmembrane segments spans residues 29-46 (YIGW…TATS), 118-133 (HFLL…EWEL), and 142-156 (WIAV…AATA). His-118 is a binding site for chlorophyll a. Tyr-126 is a pheophytin a binding site. Asp-170 and Glu-189 together coordinate [CaMn4O5] cluster. A helical transmembrane segment spans residues 197–218 (FHMLGVAGVFGGSLFSAMHGSL). Chlorophyll a is bound at residue His-198. A quinone is bound by residues His-215 and 264–265 (SF). His-215 serves as a coordination point for Fe cation. His-272 provides a ligand contact to Fe cation. Residues 274 to 288 (FLAAWPVVGIWFTAL) traverse the membrane as a helical segment. [CaMn4O5] cluster is bound by residues His-332, Glu-333, Asp-342, and Ala-344. The propeptide occupies 345–353 (AIEAPSTNG).

The protein belongs to the reaction center PufL/M/PsbA/D family. PSII is composed of 1 copy each of membrane proteins PsbA, PsbB, PsbC, PsbD, PsbE, PsbF, PsbH, PsbI, PsbJ, PsbK, PsbL, PsbM, PsbT, PsbX, PsbY, PsbZ, Psb30/Ycf12, at least 3 peripheral proteins of the oxygen-evolving complex and a large number of cofactors. It forms dimeric complexes. Requires The D1/D2 heterodimer binds P680, chlorophylls that are the primary electron donor of PSII, and subsequent electron acceptors. It shares a non-heme iron and each subunit binds pheophytin, quinone, additional chlorophylls, carotenoids and lipids. D1 provides most of the ligands for the Mn4-Ca-O5 cluster of the oxygen-evolving complex (OEC). There is also a Cl(-1) ion associated with D1 and D2, which is required for oxygen evolution. The PSII complex binds additional chlorophylls, carotenoids and specific lipids. as cofactor. Tyr-161 forms a radical intermediate that is referred to as redox-active TyrZ, YZ or Y-Z. In terms of processing, C-terminally processed by CTPA; processing is essential to allow assembly of the oxygen-evolving complex and thus photosynthetic growth.

It localises to the plastid. The protein resides in the chloroplast thylakoid membrane. The catalysed reaction is 2 a plastoquinone + 4 hnu + 2 H2O = 2 a plastoquinol + O2. Its function is as follows. Photosystem II (PSII) is a light-driven water:plastoquinone oxidoreductase that uses light energy to abstract electrons from H(2)O, generating O(2) and a proton gradient subsequently used for ATP formation. It consists of a core antenna complex that captures photons, and an electron transfer chain that converts photonic excitation into a charge separation. The D1/D2 (PsbA/PsbD) reaction center heterodimer binds P680, the primary electron donor of PSII as well as several subsequent electron acceptors. This chain is Photosystem II protein D1, found in Citrus sinensis (Sweet orange).